The chain runs to 185 residues: ADP-ribosylation factor-like protein 2 (185 aa).

The N-myristoyl glycine moiety is linked to residue Gly-2. Residues 23 to 30, 66 to 70, and 125 to 128 contribute to the GTP site; these read GLDNSGKT, DVGGQ, and NKQD.

This sequence belongs to the small GTPase superfamily. Arf family. Supercomplex made of cofactors A to E. Cofactors A and D function by capturing and stabilizing tubulin in a quasi-native conformation. Cofactor E binds to the cofactor D-tubulin complex; interaction with cofactor C then causes the release of tubulin polypeptides that are committed to the native state. In terms of tissue distribution, expressed in seedlings, leaves, roots and inflorescences.

Its subcellular location is the cytoplasm. In terms of biological role, has a role in the cofactor-dependent pathway of microtubule biogenesis. Not essential for cell viability. May play a regulatory role in sequestring TFCD. The sequence is that of ADP-ribosylation factor-like protein 2 (ARL2) from Arabidopsis thaliana (Mouse-ear cress).